The sequence spans 362 residues: DNA replication and repair protein RecF (362 aa).

30-37 (GDNAQGKT) is a binding site for ATP.

This sequence belongs to the RecF family.

It is found in the cytoplasm. Its function is as follows. The RecF protein is involved in DNA metabolism; it is required for DNA replication and normal SOS inducibility. RecF binds preferentially to single-stranded, linear DNA. It also seems to bind ATP. This chain is DNA replication and repair protein RecF, found in Agathobacter rectalis (strain ATCC 33656 / DSM 3377 / JCM 17463 / KCTC 5835 / VPI 0990) (Eubacterium rectale).